Reading from the N-terminus, the 235-residue chain is Phosphoribosylaminoimidazole-succinocarboxamide synthase (235 aa).

The protein belongs to the SAICAR synthetase family.

It catalyses the reaction 5-amino-1-(5-phospho-D-ribosyl)imidazole-4-carboxylate + L-aspartate + ATP = (2S)-2-[5-amino-1-(5-phospho-beta-D-ribosyl)imidazole-4-carboxamido]succinate + ADP + phosphate + 2 H(+). Its pathway is purine metabolism; IMP biosynthesis via de novo pathway; 5-amino-1-(5-phospho-D-ribosyl)imidazole-4-carboxamide from 5-amino-1-(5-phospho-D-ribosyl)imidazole-4-carboxylate: step 1/2. This chain is Phosphoribosylaminoimidazole-succinocarboxamide synthase, found in Streptococcus mutans serotype c (strain ATCC 700610 / UA159).